We begin with the raw amino-acid sequence, 153 residues long: Endoribonuclease YbeY (153 aa).

3 residues coordinate Zn(2+): His-119, His-123, and His-129.

Belongs to the endoribonuclease YbeY family. The cofactor is Zn(2+).

It localises to the cytoplasm. Functionally, single strand-specific metallo-endoribonuclease involved in late-stage 70S ribosome quality control and in maturation of the 3' terminus of the 16S rRNA. The polypeptide is Endoribonuclease YbeY (Desulforamulus reducens (strain ATCC BAA-1160 / DSM 100696 / MI-1) (Desulfotomaculum reducens)).